The sequence spans 478 residues: NADH-quinone oxidoreductase subunit N 1 (478 aa).

The next 14 membrane-spanning stretches (helical) occupy residues 6–26 (TVLP…SGVF), 33–53 (FAIT…LVAA), 71–91 (FADV…VTFN), 99–119 (FEFP…VSAS), 121–141 (LITL…LAAF), 156–176 (FVLG…VYGF), 193–212 (PTAA…GLAF), 244–264 (IAVF…VLGQ), 265–285 (WRDL…IGAI), 299–319 (IGHM…GVSG), 321–341 (LIYL…IIAM), 364–384 (FAFV…LAGF), 388–408 (FYVF…LGII), and 438–458 (AGVS…VFHP).

The protein belongs to the complex I subunit 2 family. In terms of assembly, NDH-1 is composed of 14 different subunits. Subunits NuoA, H, J, K, L, M, N constitute the membrane sector of the complex.

The protein resides in the cell inner membrane. The enzyme catalyses a quinone + NADH + 5 H(+)(in) = a quinol + NAD(+) + 4 H(+)(out). NDH-1 shuttles electrons from NADH, via FMN and iron-sulfur (Fe-S) centers, to quinones in the respiratory chain. The immediate electron acceptor for the enzyme in this species is believed to be ubiquinone. Couples the redox reaction to proton translocation (for every two electrons transferred, four hydrogen ions are translocated across the cytoplasmic membrane), and thus conserves the redox energy in a proton gradient. The sequence is that of NADH-quinone oxidoreductase subunit N 1 from Acidiphilium cryptum (strain JF-5).